Consider the following 284-residue polypeptide: 2,3,4,5-tetrahydropyridine-2,6-dicarboxylate N-succinyltransferase (284 aa).

It belongs to the transferase hexapeptide repeat family.

The protein localises to the cytoplasm. It carries out the reaction (S)-2,3,4,5-tetrahydrodipicolinate + succinyl-CoA + H2O = (S)-2-succinylamino-6-oxoheptanedioate + CoA. It functions in the pathway amino-acid biosynthesis; L-lysine biosynthesis via DAP pathway; LL-2,6-diaminopimelate from (S)-tetrahydrodipicolinate (succinylase route): step 1/3. This Brucella abortus (strain S19) protein is 2,3,4,5-tetrahydropyridine-2,6-dicarboxylate N-succinyltransferase.